The sequence spans 146 residues: Minor capsid protein P5 (146 aa).

Interacts with the major capsid protein.

It localises to the virion. Functionally, one of the minor capsid proteins that constitute a network internal to the major capsid proteins and outside the lipid membrane. The minor capsid proteins glue and stabilize the capsomers. The polypeptide is Minor capsid protein P5 (Paramecium bursaria Chlorella virus 1 (PBCV-1)).